The following is a 231-amino-acid chain: Somatolactin (231 aa).

The first 24 residues, 1–24 (MLMFTAIQRGVWVALLWPHLLTAS), serve as a signal peptide directing secretion. Disulfide bonds link C29-C39, C89-C205, and C222-C230. 2 N-linked (GlcNAc...) asparagine glycosylation sites follow: N35 and N145.

This sequence belongs to the somatotropin/prolactin family. In terms of tissue distribution, pituitary gland.

The protein localises to the secreted. The chain is Somatolactin from Siganus guttatus (Orange-spotted spinefoot).